The following is a 488-amino-acid chain: Glutamyl-tRNA(Gln) amidotransferase subunit A (488 aa).

Residues lysine 78 and serine 153 each act as charge relay system in the active site. Serine 177 functions as the Acyl-ester intermediate in the catalytic mechanism.

Belongs to the amidase family. GatA subfamily. As to quaternary structure, heterotrimer of A, B and C subunits.

It carries out the reaction L-glutamyl-tRNA(Gln) + L-glutamine + ATP + H2O = L-glutaminyl-tRNA(Gln) + L-glutamate + ADP + phosphate + H(+). In terms of biological role, allows the formation of correctly charged Gln-tRNA(Gln) through the transamidation of misacylated Glu-tRNA(Gln) in organisms which lack glutaminyl-tRNA synthetase. The reaction takes place in the presence of glutamine and ATP through an activated gamma-phospho-Glu-tRNA(Gln). In Caldanaerobacter subterraneus subsp. tengcongensis (strain DSM 15242 / JCM 11007 / NBRC 100824 / MB4) (Thermoanaerobacter tengcongensis), this protein is Glutamyl-tRNA(Gln) amidotransferase subunit A.